The chain runs to 551 residues: Tetrachloroethene reductive dehalogenase (551 aa).

Positions 1 to 39 (MGEINRRNFLKVSILGAAAAAVASASAVKGMVSPLVADA) form a signal peptide, tat-type signal. In terms of domain architecture, 4Fe-4S ferredoxin-type 1 spans 411–440 (PRKFGVREFCRLCKKCADACPAQAISHEKD). Residues C420, C423, C426, C430, C467, C478, C481, and C485 each coordinate [4Fe-4S] cluster. Residues 478-496 (CSNCVAVCSWNKVETWNHD) form the 4Fe-4S ferredoxin-type 2 domain.

Belongs to the PceA family. It depends on [4Fe-4S] cluster as a cofactor. Corrinoid serves as cofactor. Predicted to be exported by the Tat system. The position of the signal peptide cleavage has been experimentally proven.

The protein resides in the cytoplasm. Its subcellular location is the cell membrane. The protein localises to the secreted. The enzyme catalyses trichloroethene + chloride + A + H(+) = tetrachloroethene + AH2. It catalyses the reaction trichloroethene + AH2 = (Z)-1,2-dichloroethene + chloride + A + H(+). PceT is required as a chaperone for prePceA maturation. In the absence or presence of exogenous vitamin B12, the intracellular corrinoid level decreases in fumarate-grown cells and the PceA precursor forms catalytically inactive, corrinoid-free multiprotein aggregates. Exogenous vitamin B12 is not incorporated into the PceA precursor, even though it affects the transposition of the pce gene cluster. Functionally, catalyzes the reductive dechlorination of tetrachloroethene (PCE) to trichloroethene (TCE) and of trichloroethene to cis-1,2-dichloroethene (DCE). Can also use various chlorinated ethanes such as tetrachloroethane, pentachloroethane and hexachloroethane. Reduced methyl viologen can act as the artificial electron donor. The sequence is that of Tetrachloroethene reductive dehalogenase from Desulfitobacterium hafniense (strain Y51).